Here is a 357-residue protein sequence, read N- to C-terminus: DNA replication and repair protein RecF (357 aa).

31–38 (GQNGAGKT) is an ATP binding site.

Belongs to the RecF family.

It is found in the cytoplasm. Its function is as follows. The RecF protein is involved in DNA metabolism; it is required for DNA replication and normal SOS inducibility. RecF binds preferentially to single-stranded, linear DNA. It also seems to bind ATP. The chain is DNA replication and repair protein RecF from Coxiella burnetii (strain Dugway 5J108-111).